The primary structure comprises 140 residues: Putative pre-16S rRNA nuclease (140 aa).

This sequence belongs to the YqgF nuclease family.

The protein localises to the cytoplasm. Could be a nuclease involved in processing of the 5'-end of pre-16S rRNA. The chain is Putative pre-16S rRNA nuclease from Aeromonas hydrophila subsp. hydrophila (strain ATCC 7966 / DSM 30187 / BCRC 13018 / CCUG 14551 / JCM 1027 / KCTC 2358 / NCIMB 9240 / NCTC 8049).